A 160-amino-acid chain; its full sequence is MRCPACNYNGTKVLDSRPVQDFGSIRRRRECESCGYRFTTFEMVEQTPLIIVKKDGTRDEFNRDKILRGLVRACEKRPISIEQLETVVSRVEKTLRATAQHEIPSEQVGRLVLNELASVDEVAYVRFASVYKQFKDINVFFQELSELMERHQDTEQENQT.

A zinc finger lies at 3-34 (CPACNYNGTKVLDSRPVQDFGSIRRRRECESC). Residues 49-139 (LIIVKKDGTR…VYKQFKDINV (91 aa)) form the ATP-cone domain.

This sequence belongs to the NrdR family. Requires Zn(2+) as cofactor.

Functionally, negatively regulates transcription of bacterial ribonucleotide reductase nrd genes and operons by binding to NrdR-boxes. The sequence is that of Transcriptional repressor NrdR from Exiguobacterium sibiricum (strain DSM 17290 / CCUG 55495 / CIP 109462 / JCM 13490 / 255-15).